An 855-amino-acid chain; its full sequence is Zinc finger protein 814 (855 aa).

In terms of domain architecture, KRAB spans Val-15–Ala-91. The segment at His-120–His-142 adopts a C2H2-type 1; degenerate zinc-finger fold. 22 consecutive C2H2-type zinc fingers follow at residues Tyr-242–His-264, His-269–His-291, His-296–His-318, Tyr-324–His-346, Tyr-352–His-374, Tyr-380–His-402, Tyr-408–His-430, Tyr-436–His-458, Phe-464–His-486, Tyr-492–His-514, Tyr-520–His-542, Tyr-548–His-570, Tyr-576–His-598, Tyr-604–His-626, Tyr-632–His-654, Phe-660–His-682, Tyr-688–His-710, Tyr-716–His-738, Tyr-744–His-766, Tyr-772–His-794, Tyr-800–His-822, and Tyr-828–His-850. Residue Lys-335 forms a Glycyl lysine isopeptide (Lys-Gly) (interchain with G-Cter in SUMO2) linkage. Lys-391 participates in a covalent cross-link: Glycyl lysine isopeptide (Lys-Gly) (interchain with G-Cter in SUMO2).

This chain is Zinc finger protein 814 (ZNF814), found in Homo sapiens (Human).